Here is a 242-residue protein sequence, read N- to C-terminus: 7-cyano-7-deazaguanine synthase (242 aa).

The segment at 1-22 is disordered; sequence MNSSSNEKNKDLNRKNFSSKTD. Residue 32–42 coordinates ATP; sequence LSGGLDSTTCL. Zn(2+)-binding residues include Cys212, Cys221, Cys224, and Cys227.

This sequence belongs to the QueC family. Requires Zn(2+) as cofactor.

It catalyses the reaction 7-carboxy-7-deazaguanine + NH4(+) + ATP = 7-cyano-7-deazaguanine + ADP + phosphate + H2O + H(+). The protein operates within purine metabolism; 7-cyano-7-deazaguanine biosynthesis. Its function is as follows. Catalyzes the ATP-dependent conversion of 7-carboxy-7-deazaguanine (CDG) to 7-cyano-7-deazaguanine (preQ(0)). The sequence is that of 7-cyano-7-deazaguanine synthase from Leptospira interrogans serogroup Icterohaemorrhagiae serovar copenhageni (strain Fiocruz L1-130).